Consider the following 240-residue polypeptide: Cilia- and flagella-associated protein 77 (240 aa).

It belongs to the CFAP77 family.

It is found in the cytoplasm. The protein localises to the cytoskeleton. The protein resides in the cilium axoneme. Its subcellular location is the flagellum axoneme. Microtubule inner protein (MIP) part of the dynein-decorated doublet microtubules (DMTs) in cilia axoneme, which is required for motile cilia beating. This is Cilia- and flagella-associated protein 77 from Danio rerio (Zebrafish).